The following is a 413-amino-acid chain: Putative competence-damage inducible protein (413 aa).

This sequence belongs to the CinA family.

This chain is Putative competence-damage inducible protein, found in Alkaliphilus oremlandii (strain OhILAs) (Clostridium oremlandii (strain OhILAs)).